A 339-amino-acid chain; its full sequence is Thermospermine synthase ACAULIS5 (339 aa).

Positions 33 to 270 (CHWYEETIDD…DTWGWVMASD (238 aa)) constitute a PABS domain. S-adenosyl 3-(methylsulfanyl)propylamine contacts are provided by residues Q62, E117, D137, and 168-169 (DA). D186 serves as the catalytic Proton acceptor.

Belongs to the spermidine/spermine synthase family. As to expression, highly expressed in stem internodes and roots. Lower levels in young seedlings before flowering and rosette leaves. Expressed in the vascular tissues. Restricted to procambial and/or provascular cells during primary root development and early leaves development.

The enzyme catalyses S-adenosyl 3-(methylsulfanyl)propylamine + spermidine = thermospermine + S-methyl-5'-thioadenosine + H(+). Its function is as follows. Required for correct xylem specification through regulation of the lifetime of the xylem elements. Prevents premature death of the xylem vessel elements. This is Thermospermine synthase ACAULIS5 (ACL5) from Arabidopsis thaliana (Mouse-ear cress).